The primary structure comprises 154 residues: UPF0178 protein H16_B0290 (154 aa).

Belongs to the UPF0178 family.

The sequence is that of UPF0178 protein H16_B0290 from Cupriavidus necator (strain ATCC 17699 / DSM 428 / KCTC 22496 / NCIMB 10442 / H16 / Stanier 337) (Ralstonia eutropha).